Reading from the N-terminus, the 330-residue chain is ADP-L-glycero-D-manno-heptose-6-epimerase (330 aa).

Residues 11–12, 32–33, Q39, Q54, 75–79, and N92 each bind NADP(+); these read FI, DD, and QGACA. The active-site Proton acceptor is Y139. K143 lines the NADP(+) pocket. A substrate-binding site is contributed by N168. NADP(+)-binding residues include V169 and K177. K177 functions as the Proton acceptor in the catalytic mechanism. Substrate is bound by residues R179, H186, 200–203, R213, and Y292; that span reads FGEH.

It belongs to the NAD(P)-dependent epimerase/dehydratase family. HldD subfamily. Homopentamer. NADP(+) is required as a cofactor.

The enzyme catalyses ADP-D-glycero-beta-D-manno-heptose = ADP-L-glycero-beta-D-manno-heptose. Its pathway is nucleotide-sugar biosynthesis; ADP-L-glycero-beta-D-manno-heptose biosynthesis; ADP-L-glycero-beta-D-manno-heptose from D-glycero-beta-D-manno-heptose 7-phosphate: step 4/4. Its function is as follows. Catalyzes the interconversion between ADP-D-glycero-beta-D-manno-heptose and ADP-L-glycero-beta-D-manno-heptose via an epimerization at carbon 6 of the heptose. The polypeptide is ADP-L-glycero-D-manno-heptose-6-epimerase (Pseudomonas paraeruginosa (strain DSM 24068 / PA7) (Pseudomonas aeruginosa (strain PA7))).